We begin with the raw amino-acid sequence, 224 residues long: Thiamine-triphosphatase (224 aa).

N-acetylalanine is present on A2. Residues 5-201 form the CYTH domain; it reads LIEVERKFAP…AKLMVYLQRF (197 aa). Mg(2+)-binding residues include E7 and E9. Substrate-binding residues include K11, R55, R57, K65, and R125. Residues D145, E157, and E159 each coordinate Mg(2+). E157 provides a ligand contact to substrate. Residue K193 participates in substrate binding.

Belongs to the ThTPase family. Monomer. Mg(2+) is required as a cofactor.

Its subcellular location is the cytoplasm. It catalyses the reaction thiamine triphosphate + H2O = thiamine diphosphate + phosphate + H(+). Its function is as follows. Hydrolase highly specific for thiamine triphosphate (ThTP). The polypeptide is Thiamine-triphosphatase (Thtpa) (Mus musculus (Mouse)).